A 238-amino-acid polypeptide reads, in one-letter code: Ribosomal RNA small subunit methyltransferase G (238 aa).

Residues Gly79, Phe84, 102-104, 130-131, and Arg149 each bind S-adenosyl-L-methionine; these read EAT and IE.

It belongs to the methyltransferase superfamily. RNA methyltransferase RsmG family.

It is found in the cytoplasm. Functionally, specifically methylates the N7 position of a guanine in 16S rRNA. The chain is Ribosomal RNA small subunit methyltransferase G from Chloroflexus aggregans (strain MD-66 / DSM 9485).